Consider the following 231-residue polypeptide: Two-component response regulator ARR3 (231 aa).

The Response regulatory domain maps to 34-161 (HVLAVDDSLV…DVKRLRSYLT (128 aa)). A 4-aspartylphosphate modification is found at D94. The disordered stretch occupies residues 170–231 (GNKRKLTTPP…DSPMRSPGLA (62 aa)). Low complexity predominate over residues 185–199 (SATSSMESSDSTVES). Positions 210–221 (LTMSPESATSLV) are enriched in polar residues.

This sequence belongs to the ARR family. Type-A subfamily. Two-component system major event consists of a His-to-Asp phosphorelay between a sensor histidine kinase (HK) and a response regulator (RR). In plants, the His-to-Asp phosphorelay involves an additional intermediate named Histidine-containing phosphotransfer protein (HPt). This multistep phosphorelay consists of a His-Asp-His-Asp sequential transfer of a phosphate group between first a His and an Asp of the HK protein, followed by the transfer to a conserved His of the HPt protein and finally the transfer to an Asp in the receiver domain of the RR protein. As to expression, predominantly expressed in roots.

It is found in the nucleus. Its function is as follows. Functions as a response regulator involved in His-to-Asp phosphorelay signal transduction system. Phosphorylation of the Asp residue in the receiver domain activates the ability of the protein to promote the transcription of target genes. Type-A response regulators seem to act as negative regulators of the cytokinin signaling. This chain is Two-component response regulator ARR3 (ARR3), found in Arabidopsis thaliana (Mouse-ear cress).